We begin with the raw amino-acid sequence, 194 residues long: Probable thymidylate kinase (194 aa).

An ATP-binding site is contributed by 9–16 (GIDGVGKS).

The protein belongs to the thymidylate kinase family.

It catalyses the reaction dTMP + ATP = dTDP + ADP. The chain is Probable thymidylate kinase from Methanopyrus kandleri (strain AV19 / DSM 6324 / JCM 9639 / NBRC 100938).